Reading from the N-terminus, the 292-residue chain is Elongation factor Ts (292 aa).

The tract at residues 80–83 is involved in Mg(2+) ion dislocation from EF-Tu; the sequence is TDFV.

The protein belongs to the EF-Ts family.

It is found in the cytoplasm. Associates with the EF-Tu.GDP complex and induces the exchange of GDP to GTP. It remains bound to the aminoacyl-tRNA.EF-Tu.GTP complex up to the GTP hydrolysis stage on the ribosome. This Mycoplasmopsis synoviae (strain 53) (Mycoplasma synoviae) protein is Elongation factor Ts.